The sequence spans 274 residues: Serine acetyltransferase (274 aa).

The protein belongs to the transferase hexapeptide repeat family.

The protein resides in the cytoplasm. The enzyme catalyses L-serine + acetyl-CoA = O-acetyl-L-serine + CoA. Its pathway is amino-acid biosynthesis; L-cysteine biosynthesis; L-cysteine from L-serine: step 1/2. The chain is Serine acetyltransferase (cysE) from Buchnera aphidicola subsp. Acyrthosiphon pisum (strain APS) (Acyrthosiphon pisum symbiotic bacterium).